A 349-amino-acid polypeptide reads, in one-letter code: Alanine racemase (349 aa).

Lys35 serves as the catalytic Proton acceptor; specific for D-alanine. Lys35 carries the N6-(pyridoxal phosphate)lysine modification. Position 130 (Arg130) interacts with substrate. Tyr244 serves as the catalytic Proton acceptor; specific for L-alanine. A substrate-binding site is contributed by Met292.

It belongs to the alanine racemase family. The cofactor is pyridoxal 5'-phosphate.

The enzyme catalyses L-alanine = D-alanine. It functions in the pathway amino-acid biosynthesis; D-alanine biosynthesis; D-alanine from L-alanine: step 1/1. In terms of biological role, catalyzes the interconversion of L-alanine and D-alanine. May also act on other amino acids. The polypeptide is Alanine racemase (alr) (Cereibacter sphaeroides (strain ATCC 17025 / ATH 2.4.3) (Rhodobacter sphaeroides)).